The primary structure comprises 99 residues: EPIDERMAL PATTERNING FACTOR-like protein 8 (99 aa).

A signal peptide spans 1–35 (MDSSRKYKRCGFGAALFVANIFFSLLSLHCISGAH). Disulfide bonds link C53–C90, C57–C63, and C60–C92.

Belongs to the plant cysteine rich small secretory peptide family. Epidermal patterning factor subfamily.

The protein resides in the secreted. Controls stomatal patterning. This is EPIDERMAL PATTERNING FACTOR-like protein 8 from Arabidopsis thaliana (Mouse-ear cress).